The chain runs to 342 residues: Uricase (342 aa).

Active-site charge relay system residues include K35 and T80. T80, D81, F204, R221, V269, Q270, and N296 together coordinate urate. The active-site Charge relay system is the H298. The short motif at 340–342 (SHL) is the Microbody targeting signal element.

This sequence belongs to the uricase family. As to expression, malpighian tubules.

The protein resides in the peroxisome. The catalysed reaction is urate + O2 + H2O = 5-hydroxyisourate + H2O2. It participates in purine metabolism; urate degradation; (S)-allantoin from urate: step 1/3. Its activity is regulated as follows. Repressed by 20-hydroxyecdysone. Functionally, catalyzes the oxidation of uric acid to 5-hydroxyisourate, which is further processed to form (S)-allantoin. This Drosophila virilis (Fruit fly) protein is Uricase (Uro).